Consider the following 215-residue polypeptide: Probable phosphoglycerate mutase GpmB (215 aa).

Substrate-binding positions include 8–15, 21–22, Arg58, Lys60, 82–85, 104–105, and 151–152; these read RHGETQWN, QG, ELDM, RR, and GI. The active-site Tele-phosphohistidine intermediate is His9. Catalysis depends on Glu82, which acts as the Proton donor/acceptor.

It belongs to the phosphoglycerate mutase family. GpmB subfamily.

The catalysed reaction is (2R)-2-phosphoglycerate = (2R)-3-phosphoglycerate. It participates in carbohydrate degradation; glycolysis; pyruvate from D-glyceraldehyde 3-phosphate: step 3/5. The sequence is that of Probable phosphoglycerate mutase GpmB from Salmonella agona (strain SL483).